The sequence spans 138 residues: Cysteine desulfuration protein SufE (138 aa).

Catalysis depends on C51, which acts as the Cysteine persulfide intermediate.

This sequence belongs to the SufE family. As to quaternary structure, homodimer. Interacts with SufS.

Its subcellular location is the cytoplasm. The protein operates within cofactor biosynthesis; iron-sulfur cluster biosynthesis. Participates in cysteine desulfuration mediated by SufS. Cysteine desulfuration mobilizes sulfur from L-cysteine to yield L-alanine and constitutes an essential step in sulfur metabolism for biosynthesis of a variety of sulfur-containing biomolecules. Functions as a sulfur acceptor for SufS, by mediating the direct transfer of the sulfur atom from the S-sulfanylcysteine of SufS, an intermediate product of cysteine desulfuration process. This chain is Cysteine desulfuration protein SufE, found in Salmonella choleraesuis (strain SC-B67).